A 100-amino-acid polypeptide reads, in one-letter code: Putative exopolysaccharide production repressor protein y4xQ (100 aa).

A run of 2 helical transmembrane segments spans residues 9-29 (ILWLFLCANTLIVYLVTGSIS) and 35-55 (TMVGSLLLQLTYFANVLFLLW). The interval 66 to 100 (TTGQFHGEEQPGDPRIAGTHGRTDGDPCFEDEDSR) is disordered.

The protein to Rhizobium exopolysaccharide production repressor protein (ExoX).

Its subcellular location is the cell membrane. Could be involved in the inhibition of exopolysaccharide synthesis (EPS) and nodulation ability (nod). In Sinorhizobium fredii (strain NBRC 101917 / NGR234), this protein is Putative exopolysaccharide production repressor protein y4xQ.